The sequence spans 510 residues: Inositol-3-phosphate synthase isozyme 2 (510 aa).

Belongs to the myo-inositol 1-phosphate synthase family. NAD(+) is required as a cofactor. Expressed in siliques, leaves, roots, seed endosperm, but not in embryos. Highest expression in seeds. In leaves, only expressed in hydathodes and vascular tissue.

It localises to the cytoplasm. The catalysed reaction is D-glucose 6-phosphate = 1D-myo-inositol 3-phosphate. It functions in the pathway polyol metabolism; myo-inositol biosynthesis; myo-inositol from D-glucose 6-phosphate: step 1/2. Functionally, key enzyme in myo-inositol biosynthesis pathway that catalyzes the conversion of glucose 6-phosphate to 1-myo-inositol 1-phosphate in a NAD-dependent manner. The polypeptide is Inositol-3-phosphate synthase isozyme 2 (IPS2) (Arabidopsis thaliana (Mouse-ear cress)).